The primary structure comprises 746 residues: WD repeat-containing protein 91 (746 aa).

Positions 183-215 (QRTNQVQEENEVLRQKLFALQAEIHRLKKEEQQ) form a coiled coil. A Phosphoserine modification is found at S256. Residues 265-278 (LLPQSKKSPSRLSP) are compositionally biased toward low complexity. The disordered stretch occupies residues 265-336 (LLPQSKKSPS…QHRQRRLQDH (72 aa)). Polar residues predominate over residues 282 to 299 (PPQTQSSAKKESFGSQTT). A phosphoserine mark is found at S288 and S293. 7 WD repeats span residues 405 to 444 (EHHS…QTKA), 447 to 487 (ISKS…NLCE), 514 to 554 (AASS…QQLQ), 559 to 598 (PEPI…CAMS), 601 to 640 (AHCG…LKVS), 663 to 701 (VQVP…KVLE), and 708 to 746 (GHRA…AHKV).

Belongs to the WD repeat WDR91 family. As to quaternary structure, interacts with WDR81; involved in early to late endosome cargo transport. Interacts with BECN1; negatively regulates the PI3 kinase/PI3K activity associated with endosomal membranes.

The protein localises to the early endosome membrane. The protein resides in the late endosome membrane. Functions as a negative regulator of the PI3 kinase/PI3K activity associated with endosomal membranes via BECN1, a core subunit of the PI3K complex. By modifying the phosphatidylinositol 3-phosphate/PtdInsP3 content of endosomal membranes may regulate endosome fusion, recycling, sorting and early to late endosome transport. It is for instance, required for the delivery of cargos like BST2/tetherin from early to late endosome and thereby participates indirectly to their degradation by the lysosome. May play a role in meiosis. This Bos taurus (Bovine) protein is WD repeat-containing protein 91.